Reading from the N-terminus, the 63-residue chain is Short neurotoxin 2 (63 aa).

Intrachain disulfides connect C3/C21, C15/C39, C43/C49, and C50/C55.

It belongs to the three-finger toxin family. Short-chain subfamily. Orphan group XVIII sub-subfamily. In terms of tissue distribution, expressed by the venom gland.

The protein localises to the secreted. Functionally, blocks both the muscle-twitch response to nerve stimulation and the response to exogenous acetylcholine. The protein is Short neurotoxin 2 of Bungarus fasciatus (Banded krait).